The primary structure comprises 82 residues: Small ribosomal subunit protein bS18 (82 aa).

The protein belongs to the bacterial ribosomal protein bS18 family. Part of the 30S ribosomal subunit. Forms a tight heterodimer with protein bS6.

Binds as a heterodimer with protein bS6 to the central domain of the 16S rRNA, where it helps stabilize the platform of the 30S subunit. In Rhizobium rhizogenes (strain K84 / ATCC BAA-868) (Agrobacterium radiobacter), this protein is Small ribosomal subunit protein bS18.